The primary structure comprises 200 residues: Small ribosomal subunit protein uS4 (200 aa).

An S4 RNA-binding domain is found at 91 to 150 (TRLDNVVYRLGITPTRRSARQLVSHKHITVNGKIVNIPSYALKVGDIIGLTEKTKSSNAI).

The protein belongs to the universal ribosomal protein uS4 family. Part of the 30S ribosomal subunit. Contacts protein S5. The interaction surface between S4 and S5 is involved in control of translational fidelity.

Functionally, one of the primary rRNA binding proteins, it binds directly to 16S rRNA where it nucleates assembly of the body of the 30S subunit. With S5 and S12 plays an important role in translational accuracy. This is Small ribosomal subunit protein uS4 from Amoebophilus asiaticus (strain 5a2).